The sequence spans 297 residues: Homeobox protein HMX3 (297 aa).

Disordered regions lie at residues 24 to 43 and 96 to 172; these read NSDSKPSKPKPILAPTKAGL and AAQK…RKKK. Composition is skewed to basic and acidic residues over residues 109-123 and 145-166; these read TDRDSPELVLKSDPD and EDGKKEGGIDDWKKSDDGADKK. Positions 170–229 form a DNA-binding region, homeobox; that stretch reads KKKTRTVFSRSQVFQLESTFDMKRYLSSSERAGLAASLHLTETQVKIWFQNRRNKWKRQL.

It belongs to the HMX homeobox family. Expressed in the ear placode and vesicle and in cells forming the vestibulo-acoustic ganglion. Also expressed in the lateral line.

It is found in the nucleus. Transcription factor involved in specification of neuronal cell types and which is required for inner ear and hypothalamus development. Binds to the 5'-CAAGTG-3' core sequence. The protein is Homeobox protein HMX3 (hmx3) of Danio rerio (Zebrafish).